The following is a 452-amino-acid chain: Exodeoxyribonuclease 7 large subunit (452 aa).

This sequence belongs to the XseA family. As to quaternary structure, heterooligomer composed of large and small subunits.

Its subcellular location is the cytoplasm. The catalysed reaction is Exonucleolytic cleavage in either 5'- to 3'- or 3'- to 5'-direction to yield nucleoside 5'-phosphates.. Functionally, bidirectionally degrades single-stranded DNA into large acid-insoluble oligonucleotides, which are then degraded further into small acid-soluble oligonucleotides. This Bacillus thuringiensis (strain Al Hakam) protein is Exodeoxyribonuclease 7 large subunit.